The primary structure comprises 650 residues: Putative lipase atg15 (650 aa).

Residues 1 to 11 (MKSSRKRTKRR) are Cytoplasmic-facing. Residues 12–32 (VLQDMSISGLLLSVALLPSVV) traverse the membrane as a helical; Signal-anchor for type II membrane protein segment. Residues 33–650 (SAQDHVYLDP…CVGSTGTELR (618 aa)) lie on the Lumenal side of the membrane. N165, N200, N222, N280, and N304 each carry an N-linked (GlcNAc...) asparagine glycan. Residue S320 is the Charge relay system of the active site. N466 carries N-linked (GlcNAc...) asparagine glycosylation.

It belongs to the AB hydrolase superfamily. Lipase family. In terms of assembly, binds to both phosphatidylinositol (PI) and phosphatidylinositol 3,5-bisphosphate (PIP2).

It is found in the endosome. The protein resides in the multivesicular body membrane. Its subcellular location is the prevacuolar compartment membrane. It carries out the reaction a triacylglycerol + H2O = a diacylglycerol + a fatty acid + H(+). Functionally, lipase which is essential for lysis of subvacuolar cytoplasm to vacuole targeted bodies and intravacuolar autophagic bodies. Involved in the lysis of intravacuolar multivesicular body (MVB) vesicles. The intravacuolar membrane disintegration by atg15 is critical to life span extension. This chain is Putative lipase atg15 (atg15), found in Aspergillus fumigatus (strain ATCC MYA-4609 / CBS 101355 / FGSC A1100 / Af293) (Neosartorya fumigata).